Here is a 216-residue protein sequence, read N- to C-terminus: Protein Syd (216 aa).

It belongs to the Syd family.

It localises to the cell inner membrane. Interacts with the SecY protein in vivo. May bind preferentially to an uncomplexed state of SecY, thus functioning either as a chelating agent for excess SecY in the cell or as a regulatory factor that negatively controls the translocase function. This Shewanella baltica (strain OS223) protein is Protein Syd.